A 380-amino-acid polypeptide reads, in one-letter code: Queuine tRNA-ribosyltransferase (380 aa).

Catalysis depends on Asp-96, which acts as the Proton acceptor. Residues 96 to 100 (DSGGF), Asp-150, Gln-193, and Gly-220 each bind substrate. The tract at residues 251-257 (GVGAPDS) is RNA binding. The Nucleophile role is filled by Asp-270. The segment at 275-279 (TRIAR) is RNA binding; important for wobble base 34 recognition. Zn(2+)-binding residues include Cys-308, Cys-310, Cys-313, and His-339.

The protein belongs to the queuine tRNA-ribosyltransferase family. Homodimer. Within each dimer, one monomer is responsible for RNA recognition and catalysis, while the other monomer binds to the replacement base PreQ1. The cofactor is Zn(2+).

It catalyses the reaction 7-aminomethyl-7-carbaguanine + guanosine(34) in tRNA = 7-aminomethyl-7-carbaguanosine(34) in tRNA + guanine. The protein operates within tRNA modification; tRNA-queuosine biosynthesis. Its function is as follows. Catalyzes the base-exchange of a guanine (G) residue with the queuine precursor 7-aminomethyl-7-deazaguanine (PreQ1) at position 34 (anticodon wobble position) in tRNAs with GU(N) anticodons (tRNA-Asp, -Asn, -His and -Tyr). Catalysis occurs through a double-displacement mechanism. The nucleophile active site attacks the C1' of nucleotide 34 to detach the guanine base from the RNA, forming a covalent enzyme-RNA intermediate. The proton acceptor active site deprotonates the incoming PreQ1, allowing a nucleophilic attack on the C1' of the ribose to form the product. After dissociation, two additional enzymatic reactions on the tRNA convert PreQ1 to queuine (Q), resulting in the hypermodified nucleoside queuosine (7-(((4,5-cis-dihydroxy-2-cyclopenten-1-yl)amino)methyl)-7-deazaguanosine). This chain is Queuine tRNA-ribosyltransferase, found in Streptococcus thermophilus (strain CNRZ 1066).